The sequence spans 263 residues: Endonuclease 8 (263 aa).

Pro-2 acts as the Schiff-base intermediate with DNA in catalysis. Glu-3 acts as the Proton donor in catalysis. Residue Lys-53 is the Proton donor; for beta-elimination activity of the active site. Positions 70, 125, and 169 each coordinate DNA. The FPG-type zinc finger occupies 229-263 (KVFHRDGEACERCGGIIEKTTLSSRPFYWCPHCQK). The active-site Proton donor; for delta-elimination activity is the Arg-253.

This sequence belongs to the FPG family. Requires Zn(2+) as cofactor.

The enzyme catalyses 2'-deoxyribonucleotide-(2'-deoxyribose 5'-phosphate)-2'-deoxyribonucleotide-DNA = a 3'-end 2'-deoxyribonucleotide-(2,3-dehydro-2,3-deoxyribose 5'-phosphate)-DNA + a 5'-end 5'-phospho-2'-deoxyribonucleoside-DNA + H(+). Its function is as follows. Involved in base excision repair of DNA damaged by oxidation or by mutagenic agents. Acts as a DNA glycosylase that recognizes and removes damaged bases. Has a preference for oxidized pyrimidines, such as thymine glycol, 5,6-dihydrouracil and 5,6-dihydrothymine. Has AP (apurinic/apyrimidinic) lyase activity and introduces nicks in the DNA strand. Cleaves the DNA backbone by beta-delta elimination to generate a single-strand break at the site of the removed base with both 3'- and 5'-phosphates. In Salmonella agona (strain SL483), this protein is Endonuclease 8.